Reading from the N-terminus, the 258-residue chain is Thiazole synthase (258 aa).

Lysine 100 functions as the Schiff-base intermediate with DXP in the catalytic mechanism. 1-deoxy-D-xylulose 5-phosphate-binding positions include glycine 161, alanine 187–glycine 188, and asparagine 209–threonine 210.

It belongs to the ThiG family. As to quaternary structure, homotetramer. Forms heterodimers with either ThiH or ThiS.

Its subcellular location is the cytoplasm. It catalyses the reaction [ThiS sulfur-carrier protein]-C-terminal-Gly-aminoethanethioate + 2-iminoacetate + 1-deoxy-D-xylulose 5-phosphate = [ThiS sulfur-carrier protein]-C-terminal Gly-Gly + 2-[(2R,5Z)-2-carboxy-4-methylthiazol-5(2H)-ylidene]ethyl phosphate + 2 H2O + H(+). The protein operates within cofactor biosynthesis; thiamine diphosphate biosynthesis. Catalyzes the rearrangement of 1-deoxy-D-xylulose 5-phosphate (DXP) to produce the thiazole phosphate moiety of thiamine. Sulfur is provided by the thiocarboxylate moiety of the carrier protein ThiS. In vitro, sulfur can be provided by H(2)S. The protein is Thiazole synthase of Campylobacter jejuni subsp. jejuni serotype O:2 (strain ATCC 700819 / NCTC 11168).